Reading from the N-terminus, the 524-residue chain is Anthranilate synthase component 1 (524 aa).

Over residues M1–T16 the composition is skewed to polar residues. The disordered stretch occupies residues M1–E25. L-tryptophan contacts are provided by residues S74 and P298 to M300. G339–T340 is a binding site for chorismate. An Isoglutamyl lysine isopeptide (Lys-Gln) (interchain with Q-Cter in protein Pup) cross-link involves residue K355. E366 is a Mg(2+) binding site. Residues Y454, R474, G488–G490, and G490 contribute to the chorismate site. E503 contacts Mg(2+).

It belongs to the anthranilate synthase component I family. Heterotetramer consisting of two non-identical subunits: a beta subunit (TrpG) and a large alpha subunit (TrpE). Requires Mg(2+) as cofactor.

It carries out the reaction chorismate + L-glutamine = anthranilate + pyruvate + L-glutamate + H(+). It participates in amino-acid biosynthesis; L-tryptophan biosynthesis; L-tryptophan from chorismate: step 1/5. Its activity is regulated as follows. Feedback inhibited by tryptophan. Functionally, part of a heterotetrameric complex that catalyzes the two-step biosynthesis of anthranilate, an intermediate in the biosynthesis of L-tryptophan. In the first step, the glutamine-binding beta subunit (TrpG) of anthranilate synthase (AS) provides the glutamine amidotransferase activity which generates ammonia as a substrate that, along with chorismate, is used in the second step, catalyzed by the large alpha subunit of AS (TrpE) to produce anthranilate. In the absence of TrpG, TrpE can synthesize anthranilate directly from chorismate and high concentrations of ammonia. The polypeptide is Anthranilate synthase component 1 (trpE) (Mycolicibacterium smegmatis (strain ATCC 700084 / mc(2)155) (Mycobacterium smegmatis)).